Reading from the N-terminus, the 152-residue chain is Nascent polypeptide-associated complex subunit beta (152 aa).

Disordered regions lie at residues 19 to 39 (IGKGTPRRKVKRAPARSAGDD) and 125 to 152 (NMQKNEKDAEEDDIPDLVAGENFESKVE). Positions 23–32 (TPRRKVKRAP) are enriched in basic residues. Positions 36 to 101 (AGDDKKLQAT…GEDKELTELV (66 aa)) constitute an NAC-A/B domain.

Belongs to the NAC-beta family. As to quaternary structure, part of the nascent polypeptide-associated complex (NAC), consisting of npc-1/egd2 and npc-2/egd1. NAC associates with ribosomes via npc-2/egd1.

It is found in the cytoplasm. Its subcellular location is the nucleus. Its function is as follows. Component of the nascent polypeptide-associated complex (NAC), a dynamic component of the ribosomal exit tunnel, protecting the emerging polypeptides from interaction with other cytoplasmic proteins to ensure appropriate nascent protein targeting. The NAC complex also promotes mitochondrial protein import by enhancing productive ribosome interactions with the outer mitochondrial membrane and blocks the inappropriate interaction of ribosomes translating non-secretory nascent polypeptides with translocation sites in the membrane of the endoplasmic reticulum. Npc-2/egd1 may act as a transcription factor that exert a negative effect on the expression of several genes that are transcribed by RNA polymerase II. This is Nascent polypeptide-associated complex subunit beta (npc-2) from Neurospora crassa (strain ATCC 24698 / 74-OR23-1A / CBS 708.71 / DSM 1257 / FGSC 987).